Consider the following 382-residue polypeptide: V-type proton ATPase subunit C 1 (382 aa).

Thr-2 is modified (N-acetylthreonine).

It belongs to the V-ATPase C subunit family. V-ATPase is a heteromultimeric enzyme made up of two complexes: the ATP-hydrolytic V1 complex and the proton translocation V0 complex. The V1 complex consists of three catalytic AB heterodimers that form a heterohexamer, three peripheral stalks each consisting of EG heterodimers, one central rotor including subunits D and F, and the regulatory subunits C and H. The proton translocation complex V0 consists of the proton transport subunit a, a ring of proteolipid subunits c9c'', rotary subunit d, subunits e and f, and two accessory subunits.

Functionally, subunit of the V1 complex of vacuolar(H+)-ATPase (V-ATPase), a multisubunit enzyme composed of a peripheral complex (V1) that hydrolyzes ATP and a membrane integral complex (V0) that translocates protons. V-ATPase is responsible for acidifying and maintaining the pH of intracellular compartments and in some cell types, is targeted to the plasma membrane, where it is responsible for acidifying the extracellular environment. Subunit C is necessary for the assembly of the catalytic sector of the enzyme and is likely to have a specific function in its catalytic activity. The polypeptide is V-type proton ATPase subunit C 1 (atp6v1c1) (Xenopus laevis (African clawed frog)).